The primary structure comprises 99 residues: Protein Frey (99 aa).

Residues 13 to 29 traverse the membrane as a helical segment; sequence AGLSLFALYLVLAAALL. Residues 64–90 are disordered; sequence RPKHPWPRGPRPLLSRAQQRKRDGPDM.

In terms of assembly, interacts with SPPL2C (via active sites); the interaction stabilizes FREY1 protein and inhibits SPPL2C proteolytic activity. Interacts with IZUMO1; the interaction retains IZUMO1 at the endoplasmic reticulum membrane and coordinates IZUMO1 complex assembly.

It localises to the endoplasmic reticulum membrane. In terms of biological role, key regulator for male fertility expressed transiently in round spermatids where it recruits IZUMO1 at the endoplasmic reticulum (ER) membrane and coordinates the oolemmal binding multimeric complex (IZUMO1 complex) assembly. Upon complete assembly of the IZUMO1 complex, its ER retention is released, facilitating IZUMO1 complex export to the acrosome. Through the interaction with SPPL2C, inhibits its intramembrane protease activity directly accessing the catalytic center of an I-CLiP. The sequence is that of Protein Frey (FREY1) from Bos taurus (Bovine).